Reading from the N-terminus, the 543-residue chain is Chaperonin GroEL (543 aa).

Residues 29 to 32 (TLGP), 86 to 90 (DGTTT), glycine 413, 476 to 478 (NAA), and aspartate 492 contribute to the ATP site.

This sequence belongs to the chaperonin (HSP60) family. Forms a cylinder of 14 subunits composed of two heptameric rings stacked back-to-back. Interacts with the co-chaperonin GroES.

The protein localises to the cytoplasm. The enzyme catalyses ATP + H2O + a folded polypeptide = ADP + phosphate + an unfolded polypeptide.. In terms of biological role, together with its co-chaperonin GroES, plays an essential role in assisting protein folding. The GroEL-GroES system forms a nano-cage that allows encapsulation of the non-native substrate proteins and provides a physical environment optimized to promote and accelerate protein folding. In Streptococcus pyogenes serotype M1, this protein is Chaperonin GroEL.